We begin with the raw amino-acid sequence, 340 residues long: Phosphoribosylformylglycinamidine cyclo-ligase (340 aa).

Belongs to the AIR synthase family.

The protein localises to the cytoplasm. It carries out the reaction 2-formamido-N(1)-(5-O-phospho-beta-D-ribosyl)acetamidine + ATP = 5-amino-1-(5-phospho-beta-D-ribosyl)imidazole + ADP + phosphate + H(+). The protein operates within purine metabolism; IMP biosynthesis via de novo pathway; 5-amino-1-(5-phospho-D-ribosyl)imidazole from N(2)-formyl-N(1)-(5-phospho-D-ribosyl)glycinamide: step 2/2. In Crocosphaera subtropica (strain ATCC 51142 / BH68) (Cyanothece sp. (strain ATCC 51142)), this protein is Phosphoribosylformylglycinamidine cyclo-ligase.